The primary structure comprises 1273 residues: Chitin synthase 7 (1273 aa).

The interval 1-69 (MPAVERNAPF…LINPSSGGPG (69 aa)) is disordered. Residues 1–79 (MPAVERNAPF…FSAASRSKHR (79 aa)) are Cytoplasmic-facing. The helical transmembrane segment at 80–100 (FSWWTAFSLFVTFWAPSPLLS) threads the bilayer. Residues 101-117 (SCCGLKDKQSRQAWREK) lie on the Extracellular side of the membrane. Residues 118–138 (VSLVFIAILLGGFIGFITMGL) traverse the membrane as a helical segment. The Cytoplasmic portion of the chain corresponds to 139–360 (NAALCPSASS…FISNLVLYCS (222 aa)). Residues 361-381 (LVVILAIVLIRFFMAVWFAWF) form a helical membrane-spanning segment. The Extracellular portion of the chain corresponds to 382–820 (MAGRMSSPPR…LCGTFCFSMQ (439 aa)). N-linked (GlcNAc...) asparagine glycosylation is present at Asn-412. Residues 416-451 (AAPWANKQRPPPSQPARRRRDSAQSATPSVPDSLSV) form a disordered region. Asn-667 and Asn-796 each carry an N-linked (GlcNAc...) asparagine glycan. The helical transmembrane segment at 821–841 (FVVFMDLLGTAVLPISIALTY) threads the bilayer. At 842–857 (TLVVTYCLNPPHSFTE) the chain is on the cytoplasmic side. The chain crosses the membrane as a helical span at residues 858–878 (AIPLMLLVAVIGMPALLILLA). At 879-881 (TRK) the chain is on the extracellular side. Residues 882 to 902 (VVYVLWMLIYLLALPVWNFVL) traverse the membrane as a helical segment. At 903-1273 (PVYSFWHFDD…RGRSYHDRFS (371 aa)) the chain is on the cytoplasmic side. Disordered regions lie at residues 966–1009 (RELE…SVTV) and 1126–1273 (NGGG…DRFS). Residues 1000–1009 (SDSFSDSVTV) show a composition bias toward low complexity. Over residues 1215-1232 (QHPPQPSQPPQPPQPAQP) the composition is skewed to pro residues. The span at 1233-1246 (TRPGGAPAAPPRGA) shows a compositional bias: low complexity.

This sequence belongs to the chitin synthase family. Class IV subfamily.

The protein resides in the cell membrane. The protein localises to the cytoplasmic vesicle membrane. It catalyses the reaction [(1-&gt;4)-N-acetyl-beta-D-glucosaminyl](n) + UDP-N-acetyl-alpha-D-glucosamine = [(1-&gt;4)-N-acetyl-beta-D-glucosaminyl](n+1) + UDP + H(+). Polymerizes chitin, a structural polymer of the cell wall and septum, by transferring the sugar moiety of UDP-GlcNAc to the non-reducing end of the growing chitin polymer. This chain is Chitin synthase 7, found in Mycosarcoma maydis (Corn smut fungus).